A 34-amino-acid polypeptide reads, in one-letter code: Corticostatin-2 (34 aa).

3 disulfide bridges follow: C3/C32, C5/C21, and C11/C31.

Belongs to the alpha-defensin family.

The protein localises to the secreted. In terms of biological role, microbicidal activity and inhibits corticotropin (ACTH) stimulated corticosterone production. This Oryctolagus cuniculus (Rabbit) protein is Corticostatin-2.